We begin with the raw amino-acid sequence, 349 residues long: Phloroglucinol synthase (349 aa).

Residue C138 is part of the active site.

It belongs to the thiolase-like superfamily. Chalcone/stilbene synthases family.

The enzyme catalyses 3 malonyl-CoA + 3 H(+) = 1,3,5-trihydroxybenzene + 3 CO2 + 3 CoA. It participates in antibiotic biosynthesis. In terms of biological role, type III polyketide synthase that catalyzes the synthesis of phloroglucinol from three molecules of malonyl-CoA. In addition to its ability to produce phloroglucinol from malonyl-CoA, it exhibits broad substrate specificity, accepting C4-C12 aliphatic acyl-CoAs and phenylacetyl-CoA as the starters to form C6-polyoxoalkylated alpha-pyrones from sequential condensation with malonyl-CoA. The protein is Phloroglucinol synthase of Pseudomonas fluorescens (strain ATCC BAA-477 / NRRL B-23932 / Pf-5).